Reading from the N-terminus, the 207-residue chain is Small ribosomal subunit protein uS4c (207 aa).

The interval 22-51 (TQKNCTRDFPPGQHGPKKKGGGNQKTKESQ) is disordered. Residues 97-158 (MRLDTIIFRL…NSQNFVKNLL (62 aa)) form the S4 RNA-binding domain.

Belongs to the universal ribosomal protein uS4 family. In terms of assembly, part of the 30S ribosomal subunit. Contacts protein S5. The interaction surface between S4 and S5 is involved in control of translational fidelity.

The protein resides in the plastid. It is found in the chloroplast. One of the primary rRNA binding proteins, it binds directly to 16S rRNA where it nucleates assembly of the body of the 30S subunit. Functionally, with S5 and S12 plays an important role in translational accuracy. The chain is Small ribosomal subunit protein uS4c (rps4) from Chlorella vulgaris (Green alga).